We begin with the raw amino-acid sequence, 168 residues long: Gastrula zinc finger protein XlCGF42.1 (168 aa).

C2H2-type zinc fingers lie at residues 6–28 (YSCS…RKSH), 34–56 (FCCS…YRTH), 62–84 (CICS…QKYH), 90–112 (FSCS…LRIH), 118–140 (YTCT…LRIH), and 146–165 (FTCS…DRHH).

It belongs to the krueppel C2H2-type zinc-finger protein family.

Its subcellular location is the nucleus. May be involved in transcriptional regulation. The polypeptide is Gastrula zinc finger protein XlCGF42.1 (Xenopus laevis (African clawed frog)).